A 621-amino-acid polypeptide reads, in one-letter code: Lamin-C (621 aa).

Positions 1–47 (MSARRVTLNTRVSRASTSTPVGGASTSSRVGATSPTSPTRTSRQQEK) are disordered. The segment at 1-47 (MSARRVTLNTRVSRASTSTPVGGASTSSRVGATSPTSPTRTSRQQEK) is head. Residues 7-31 (TLNTRVSRASTSTPVGGASTSSRVG) show a composition bias toward polar residues. Residues 33–42 (TSPTSPTRTS) are compositionally biased toward low complexity. Ser34 is subject to Phosphoserine. The IF rod domain maps to 46–402 (EKEELQHLND…KLLCGEERRL (357 aa)). The interval 47–85 (KEELQHLNDRLACYIDRMRNLENENSRLTQELNLAQDTV) is coil 1A. Residues 86–95 (NRETSNLKAV) are linker 1. A coil 1B region spans residues 96-233 (YEKELAAARK…QVHTQELTET (138 aa)). The interval 234 to 257 (RSRRQIEISEIDGRLSRQYEAKLQ) is linker 2. The tract at residues 258–403 (QSLQELRDQY…LLCGEERRLN (146 aa)) is coil 2. The interval 404–458 (IESPGRPTTDSGISSNGSHLTASASSRSGRVTPSGRRSATPGISGSSAVKRRRTV) is disordered. Positions 404-621 (IESPGRPTTD…GVRSLFSLLF (218 aa)) are tail. Ser406 and Ser441 each carry phosphoserine. The span at 409-450 (RPTTDSGISSNGSHLTASASSRSGRVTPSGRRSATPGISGSS) shows a compositional bias: polar residues. Residue Thr443 is modified to Phosphothreonine. The Nuclear localization signal signature appears at 453–458 (KRRRTV). The 115-residue stretch at 468–582 (SEYSVNAAAK…EDVASYDRVR (115 aa)) folds into the LTD domain. The interval 585–605 (VSSHTSRHRSSGTPSTGFTLG) is disordered.

This sequence belongs to the intermediate filament family. In terms of assembly, interacts with MAN1. First detected from late stage 12 in the oenocytes, abdominal segments, hindgut and posterior spiracles, with expression increasing in stage 13 (at protein level). In stage 14, also becomes detectable in the foregut (at protein level). Stage 15 shows expression in the epidermis, dorsal longitudinal trunk, pharynx, esophagus and proventriculus, with the dorsal pharyngeal musculature showing expression in late stage 15 (at protein level). In stage 16 embryos, also detected in the exit glia with increasing expression in the somatic musculature (at protein level). Also detected in the visceral mesoderm but not in the midgut or central nervous system until the end of embryogenesis (at protein level). In third instar larvae, detectable at varying levels in all cell types (at protein level). Expressed in spermatocytes (at protein level).

Its subcellular location is the nucleus. It localises to the nucleus lamina. In terms of biological role, lamins are components of the nuclear lamina, a fibrous layer on the nucleoplasmic side of the inner nuclear membrane, which is thought to provide a framework for the nuclear envelope and may also interact with chromatin. In spermatocytes, regulates cytokinesis during meiosis. This chain is Lamin-C (LamC), found in Drosophila melanogaster (Fruit fly).